The primary structure comprises 221 residues: PKHD-type hydroxylase P9303_20491 (221 aa).

The region spanning 80–174 (HIHGVMFSRS…RLVCVGWIQS (95 aa)) is the Fe2OG dioxygenase domain. 3 residues coordinate Fe cation: H98, D100, and H155. R165 contacts 2-oxoglutarate.

Requires Fe(2+) as cofactor. L-ascorbate is required as a cofactor.

The sequence is that of PKHD-type hydroxylase P9303_20491 from Prochlorococcus marinus (strain MIT 9303).